Reading from the N-terminus, the 2054-residue chain is Multiple PDZ domain protein (2054 aa).

One can recognise an L27 domain in the interval 3–63 (ETIDKNRALQ…SLQQLKDQVN (61 aa)). Residues 138–225 (IFELLKPPCG…TIQLVIARGS (88 aa)) enclose the PDZ 1 domain. Residue Ser231 is modified to Phosphoserine. PDZ domains are found at residues 258–338 (TIEL…ARGA), 377–463 (DVEL…MRKG), 545–626 (VAHV…CRRT), and 692–778 (AIEL…VAKP). Phosphoserine occurs at positions 782 and 1065. In terms of domain architecture, PDZ 6 spans 995 to 1076 (TVTIAKGSSS…IGPDIKITYV (82 aa)). The interval 1110-1129 (PELPEREEGEGEESELQNAA) is disordered. The region spanning 1138-1230 (RVELWREPSK…PVVFMVQSIV (93 aa)) is the PDZ 7 domain. An Omega-N-methylarginine modification is found at Arg1157. Residues 1261–1273 (LQLTSDKAPSQSE) show a composition bias toward polar residues. Residues 1261-1312 (LQLTSDKAPSQSESESEKATLCSVPSSSPSVFSEMSSDYAQPSATTVAEDED) are disordered. Positions 1283–1297 (SVPSSSPSVFSEMSS) are enriched in low complexity. The 84-residue stretch at 1337–1420 (MIELEKGHSG…KVKIIFIRNA (84 aa)) folds into the PDZ 8 domain. The tract at residues 1433–1454 (AADPLPSTSESPQNKEVEPSIT) is disordered. One can recognise a PDZ 9 domain in the interval 1470–1551 (HLELPKDQGG…TVKLTVGAEN (82 aa)). The disordered stretch occupies residues 1560–1594 (AAVTASGERKDSSQTPAVPAPDLEPIPSTSRSSTP). 2 PDZ domains span residues 1613–1696 (TIEI…YRDE) and 1709–1791 (TVEL…GRIK). The tract at residues 1795–1834 (FHSERRPSQSSQVSESSLSSFSLPRSGIHTSESSESSAKK) is disordered. A phosphoserine mark is found at Ser1802 and Ser1808. Over residues 1802–1834 (SQSSQVSESSLSSFSLPRSGIHTSESSESSAKK) the composition is skewed to low complexity. 2 PDZ domains span residues 1846–1932 (TVEI…VAGG) and 1971–2054 (TITL…MVLS).

Interacts with F11R/JAM, CLDN1, NG2, CXADR, CRB1, MPP4 and PALS1, HTR2A, HTR2B, PLEKHA1/TAPP1 and PLEKHA2/TAPP2. Interacts with CXADR. Interacts with HTR2C, CLDN5, DLG4, GRIN1, SYNGAP1, CAMK2A and CAMK2B. Interacts with FAT4 (via cytoplasmic domain). Interacts with DLL1. Abundant in all cerebral cortical layers, especially the piriform cortex, the pyramidal cells of the CA1-CA3 subfields of the hippocampus, as well as the granular layer of the dentate gyrus. Detected in the internal granular layer and the mitral cell layer of the olfactory bulb; in the medial habenular nucleus; and in amygdaloid, thalamic, hypothalamic, and pontine nuclei. In the cerebellum, found at high levels in the granular layer. Detected in the lateral ventricle. Expression overlaps with 5-HT2C receptor expression in all regions of the brain including the choroid plexus, where 5-HT2C receptors are highly enriched.

It is found in the endomembrane system. The protein resides in the cell junction. The protein localises to the tight junction. Its subcellular location is the synapse. It localises to the apical cell membrane. It is found in the postsynaptic density. The protein resides in the cell projection. The protein localises to the dendrite. Its subcellular location is the synaptosome. Its function is as follows. Member of the NMDAR signaling complex that may play a role in control of AMPAR potentiation and synaptic plasticity in excitatory synapses. Promotes clustering of HT2RC at the cell surface. The sequence is that of Multiple PDZ domain protein (Mpdz) from Rattus norvegicus (Rat).